The chain runs to 5085 residues: Linear gramicidin synthase subunit D (5085 aa).

4 consecutive Carrier domains span residues 962–1037, 2023–2097, 3544–3619, and 4601–4676; these read APRT…AAAG, SPST…EEKA, APRN…ELLT, and APQT…EEII. An O-(pantetheine 4'-phosphoryl)serine mark is found at serine 997, serine 2058, serine 3579, and serine 4636.

This sequence belongs to the ATP-dependent AMP-binding enzyme family. As to quaternary structure, large multienzyme complex composed of 4 subunits; LgrA, LgrB, LgrC and LgrD. Pantetheine 4'-phosphate serves as cofactor.

Its function is as follows. Activates the 13th to the 16th (Trp, D-Leu, Trp and Gly) amino acids in linear gramicidin and catalyzes the formation of the peptide bond between them. This enzyme is also responsible for the epimerization of the 14th (D-Leu) amino acid. It also catalyzes the NAD(P)H-dependent reduction of the C-terminal glycine residue of the N-formylated 16-mer peptide, that binds to the peptidyl carrier domain of the terminal module of this protein, to form a peptidyl-aldehyde intermediate that is released from the enzyme complex. This chain is Linear gramicidin synthase subunit D (lgrD), found in Brevibacillus parabrevis.